The sequence spans 152 residues: Spermine/spermidine N(1)-acetyltransferase (152 aa).

In terms of domain architecture, N-acetyltransferase spans 3–152; the sequence is INIKAVTDDN…NGEKVMVKEL (150 aa). Acetyl-CoA contacts are provided by residues 82 to 84, 89 to 95, and 122 to 131; these read FFI, QGKGLGK, and NIHAIRLYQR. Residue Tyr-129 is the Proton donor of the active site.

It belongs to the acetyltransferase family.

It carries out the reaction an alkane-alpha,omega-diamine + acetyl-CoA = an N-acetylalkane-alpha,omega-diamine + CoA + H(+). The catalysed reaction is spermine + acetyl-CoA = N(1)-acetylspermine + CoA + H(+). The enzyme catalyses spermidine + acetyl-CoA = N(1)-acetylspermidine + CoA + H(+). Its pathway is amine and polyamine degradation; spermine degradation. It functions in the pathway amine and polyamine degradation; spermidine degradation. Its activity is regulated as follows. Putrescine and N(8)-acetylspermidine are competitive inhibitors of spermidine acetylation. Its function is as follows. Acetylates both spermidine and spermine at primary propyl amine moieties, with spermine being the preferred substrate. The polypeptide is Spermine/spermidine N(1)-acetyltransferase (bltD) (Bacillus subtilis (strain 168)).